The sequence spans 639 residues: Polyvinylalcohol dehydrogenase (639 aa).

The first 33 residues, 1–33, serve as a signal peptide directing secretion; sequence MQQNIERNQVSMTTSRFVWGAVMALVALGSASA. The Cytochrome c domain occupies 36–152; the sequence is LNLPDGAALY…TPDQWNGWGA (117 aa). The heme site is built by cysteine 49, cysteine 52, and histidine 53.

It belongs to the bacterial PQQ dehydrogenase family. Monomer. Pyrroloquinoline quinone serves as cofactor.

The protein localises to the cytoplasm. It catalyses the reaction a polyvinyl alcohol + 2n Fe(III)-[cytochrome c] = an oxidized polyvinyl alcohol + 2n Fe(II)-[cytochrome c] + 2n H(+). In terms of biological role, catalyzes the oxidation of polyvinyl alcohol (PVA) in the polyvinyl alcohol degradation pathway. In Pseudomonas sp, this protein is Polyvinylalcohol dehydrogenase (pvaA).